A 323-amino-acid polypeptide reads, in one-letter code: Cobalamin biosynthesis protein CobD (323 aa).

A run of 5 helical transmembrane segments spans residues 52–72, 73–93, 154–174, 214–234, and 294–314; these read IAGV…TWLM, VWGS…LLSS, DGII…GMAF, ALLM…AASI, and IRLM…TAAL.

This sequence belongs to the CobD/CbiB family.

It localises to the cell membrane. Its pathway is cofactor biosynthesis; adenosylcobalamin biosynthesis. Converts cobyric acid to cobinamide by the addition of aminopropanol on the F carboxylic group. This is Cobalamin biosynthesis protein CobD from Pelobacter propionicus (strain DSM 2379 / NBRC 103807 / OttBd1).